A 483-amino-acid polypeptide reads, in one-letter code: Glutamyl-tRNA(Gln) amidotransferase subunit A (483 aa).

Catalysis depends on charge relay system residues K76 and S151. S175 (acyl-ester intermediate) is an active-site residue.

Belongs to the amidase family. GatA subfamily. In terms of assembly, heterotrimer of A, B and C subunits.

It catalyses the reaction L-glutamyl-tRNA(Gln) + L-glutamine + ATP + H2O = L-glutaminyl-tRNA(Gln) + L-glutamate + ADP + phosphate + H(+). Its function is as follows. Allows the formation of correctly charged Gln-tRNA(Gln) through the transamidation of misacylated Glu-tRNA(Gln) in organisms which lack glutaminyl-tRNA synthetase. The reaction takes place in the presence of glutamine and ATP through an activated gamma-phospho-Glu-tRNA(Gln). This is Glutamyl-tRNA(Gln) amidotransferase subunit A from Pseudomonas syringae pv. syringae (strain B728a).